Reading from the N-terminus, the 445-residue chain is POU domain, class 3, transcription factor 2 (445 aa).

Disordered regions lie at residues 64–173 (ALSH…WRSA) and 203–269 (LGAG…TPTS). Over residues 67–90 (HGGGGGGGGGGGGGGGGGGGGGDG) the composition is skewed to gly residues. Low complexity-rich tracts occupy residues 125-151 (QQQHQQQQQQQQQQQQQQQQQQQQQQQ) and 163-173 (HHPGPGAWRSA). Residues 217 to 226 (LRDAHDEPHH) show a composition bias toward basic and acidic residues. Residues 227 to 237 (ADHHPHPHSHP) are compositionally biased toward basic residues. The span at 239-253 (QQPPPPPPPQGPPGH) shows a compositional bias: pro residues. The POU-specific domain maps to 264 to 338 (EDTPTSDDLE…LLNKWLEEAD (75 aa)). Residue S343 is modified to Phosphoserine. Positions 356-415 (KRKKRTSIEVSVKGALESHFLKCPKPSAQEITSLADSLQLEKEVVRVWFCNRRQKEKRMT) form a DNA-binding region, homeobox. Residues 411-445 (EKRMTPPGGTLPGAEDVYGGSRDTPPHHGVQTPVQ) form a disordered region.

This sequence belongs to the POU transcription factor family. Class-3 subfamily. As to quaternary structure, interacts with PQBP1. Interaction with ISL1. As to expression, expressed specifically in the neuroectodermal cell lineage.

It localises to the nucleus. Functionally, transcription factor that plays a key role in neuronal differentiation. Binds preferentially to the recognition sequence which consists of two distinct half-sites, ('GCAT') and ('TAAT'), separated by a non-conserved spacer region of 0, 2, or 3 nucleotides. Acts as a transcriptional activator when binding cooperatively with SOX4, SOX11, or SOX12 to gene promoters. The combination of three transcription factors, ASCL1, POU3F2/BRN2 and MYT1L, is sufficient to reprogram fibroblasts and other somatic cells into induced neuronal (iN) cells in vitro. Acts downstream of ASCL1, accessing chromatin that has been opened by ASCL1, and promotes transcription of neuronal genes. The chain is POU domain, class 3, transcription factor 2 (Pou3f2) from Mus musculus (Mouse).